Here is a 642-residue protein sequence, read N- to C-terminus: Medium-chain-fatty-acid--[acyl-carrier-protein] ligase TtuA (642 aa).

Belongs to the ATP-dependent AMP-binding enzyme family.

It carries out the reaction a medium-chain fatty acid + holo-[ACP] + ATP = a medium-chain fatty acyl-[ACP] + AMP + diphosphate. It catalyses the reaction a medium-chain fatty acid + ATP + H(+) = a medium-chain fatty acyl-AMP + diphosphate. The catalysed reaction is a medium-chain fatty acyl-AMP + holo-[ACP] = a medium-chain fatty acyl-[ACP] + AMP + H(+). The enzyme catalyses decanoate + holo-[ACP] + ATP = decanoyl-[ACP] + AMP + diphosphate. It carries out the reaction decanoate + ATP + H(+) = decanoyl-AMP + diphosphate. It catalyses the reaction decanoyl-AMP + holo-[ACP] = decanoyl-[ACP] + AMP + H(+). Ligase likely involved in the biosynthesis of a polyyne metabolite. Catalyzes the activation of decanoic acid, followed by the loading of the activated decanoic acid onto the acyl carrier protein TtuC. Decanoic acid is the preferred substrate, but it can also use 10-undecenoic acid and lauric acid. Nonanoic acid and 7-octenoic acid are only weakly activated. The polypeptide is Medium-chain-fatty-acid--[acyl-carrier-protein] ligase TtuA (Teredinibacter turnerae (strain ATCC 39867 / T7901)).